The sequence spans 171 residues: Co-chaperone protein HscB (171 aa).

The J domain occupies 2 to 74 (DYFTLFGLPA…LTRAEYLLSL (73 aa)).

Belongs to the HscB family. In terms of assembly, interacts with HscA and stimulates its ATPase activity. Interacts with IscU.

Co-chaperone involved in the maturation of iron-sulfur cluster-containing proteins. Seems to help targeting proteins to be folded toward HscA. This chain is Co-chaperone protein HscB, found in Salmonella heidelberg (strain SL476).